The chain runs to 162 residues: Thy-1 membrane glycoprotein (162 aa).

An N-terminal signal peptide occupies residues 1 to 19 (MNPAISVALLLSVLQVSRG). Glutamine 20 is modified (pyrrolidone carboxylic acid). The region spanning 20-127 (QKVTSLTACL…NKSISVYRDK (108 aa)) is the Ig-like V-type domain. 2 disulfides stabilise this stretch: cysteine 28–cysteine 131 and cysteine 38–cysteine 105. N-linked (GlcNAc...) asparagine glycosylation is found at asparagine 42, asparagine 94, and asparagine 118. A lipid anchor (GPI-anchor amidated cysteine; alternate) is attached at cysteine 131. Positions 132-162 (GGISLLVQNTSWMLLLLLSLSLLQALDFISL) are cleaved as a propeptide — removed in mature form.

It is found in the cell membrane. May play a role in cell-cell or cell-ligand interactions during synaptogenesis and other events in the brain. This Mus musculus (Mouse) protein is Thy-1 membrane glycoprotein (Thy1).